Reading from the N-terminus, the 145-residue chain is Large ribosomal subunit protein uL15 (145 aa).

Over residues 1–30 (MAHSLRKTRKLRGHVSHGHGRIGKHRKHPG) the composition is skewed to basic residues. The segment at 1 to 48 (MAHSLRKTRKLRGHVSHGHGRIGKHRKHPGGRGNAGGQHHHRINRDKY) is disordered.

The protein belongs to the universal ribosomal protein uL15 family. In terms of assembly, component of the large ribosomal subunit.

It localises to the cytoplasm. Its subcellular location is the cytosol. The protein localises to the rough endoplasmic reticulum. Its function is as follows. Component of the large ribosomal subunit. The polypeptide is Large ribosomal subunit protein uL15 (rpl-27a) (Oscheius tipulae).